The following is a 161-amino-acid chain: Cyclic pyranopterin monophosphate synthase (161 aa).

Substrate-binding positions include 75 to 77 (LCH) and 113 to 114 (ME). Asp128 is an active-site residue.

This sequence belongs to the MoaC family. In terms of assembly, homohexamer; trimer of dimers.

It catalyses the reaction (8S)-3',8-cyclo-7,8-dihydroguanosine 5'-triphosphate = cyclic pyranopterin phosphate + diphosphate. It participates in cofactor biosynthesis; molybdopterin biosynthesis. Catalyzes the conversion of (8S)-3',8-cyclo-7,8-dihydroguanosine 5'-triphosphate to cyclic pyranopterin monophosphate (cPMP). This chain is Cyclic pyranopterin monophosphate synthase, found in Citrobacter koseri (strain ATCC BAA-895 / CDC 4225-83 / SGSC4696).